We begin with the raw amino-acid sequence, 274 residues long: Tryptase beta-2 (274 aa).

The first 19 residues, Met1 to Ala19, serve as a signal peptide directing secretion. A propeptide spans Ala20–Gly29 (activation peptide). In terms of domain architecture, Peptidase S1 spans Ile30–Pro271. An intrachain disulfide couples Cys58 to Cys74. His73 (charge relay system) is an active-site residue. Tyr96 carries the post-translational modification Phosphotyrosine. Asn104 carries N-linked (GlcNAc...) asparagine glycosylation. The Charge relay system role is filled by Asp120. N-linked (GlcNAc...) asparagine glycosylation occurs at Asn131. Cystine bridges form between Cys154–Cys229, Cys187–Cys210, and Cys219–Cys247. Catalysis depends on Ser223, which acts as the Charge relay system.

This sequence belongs to the peptidase S1 family. Tryptase subfamily. Homotetramer. The active tetramer is converted to inactive monomers at neutral and acidic pH in the absence of heparin. Low concentrations of inactive monomers become active monomers at pH 6.0 in the presence of heparin. When the concentration of active monomers is higher, they convert to active monomers and then to active tetramers. These monomers are active and functionally distinct from the tetrameric enzyme. In contrast to the hidden active sites in the tetrameric form, the active site of the monomeric form is accessible for macromolecular proteins and inhibitors, e.g. fibrinogen which is a substrate for the monomeric but not for the tetrameric form. The monomeric form forms a complex with SERPINB6.

It localises to the secreted. The catalysed reaction is Preferential cleavage: Arg-|-Xaa, Lys-|-Xaa, but with more restricted specificity than trypsin.. In terms of biological role, tryptase is the major neutral protease present in mast cells and is secreted upon the coupled activation-degranulation response of this cell type. Plays a role in innate immunity. The sequence is that of Tryptase beta-2 (Tpsb2) from Rattus norvegicus (Rat).